A 324-amino-acid chain; its full sequence is Carbonic anhydrase 15 (324 aa).

The N-terminal stretch at 1–18 is a signal peptide; it reads MWALDFLLSFLLIQLAAQ. An Alpha-carbonic anhydrase domain is found at 23-293; sequence GTWCYDSQDP…LGGRRISASP (271 aa). The Proton acceptor role is filled by histidine 90. Zn(2+) contacts are provided by histidine 122, histidine 124, and histidine 147. Residue tyrosine 155 is part of the active site. N-linked (GlcNAc...) asparagine glycosylation is found at asparagine 184, asparagine 194, and asparagine 203. Position 231-232 (231-232) interacts with substrate; sequence TT. Residues 269–290 are disordered; it reads LHPRPLTSNFRPQQPLGGRRIS.

The protein belongs to the alpha-carbonic anhydrase family. It depends on Zn(2+) as a cofactor.

The protein resides in the secreted. It carries out the reaction hydrogencarbonate + H(+) = CO2 + H2O. Repressed by coumarins. In terms of biological role, reversible hydration of carbon dioxide. The chain is Carbonic anhydrase 15 (Ca15) from Mus musculus (Mouse).